Reading from the N-terminus, the 418-residue chain is MTIFEELKARGLVFQTTDEEALKKSLDDGQVSFYTGYDPTADSLHLGHLVPILVMRHLQLAGHKPYALVGGATGLIGDPSFKDDERSLQTKETVKNWVQSIRSQLERFIDFKHGDNKAQMVNNYDWMGKITFIDFLRDVGKYFTVNYMMSKESVKKRIETGISYTEFAYQIMQGYDFYVLNQEHAVTLQVGGSDQWGNMTAGTELIRRKANKTAHVITVPLITDATGKKFGKSEGNAVWLDADKTSPYEMYQFWLNVMDADAIRFLKIFTFLSLDEIEDIRVKFEAAPHERLAQKILAKEVVTFVHGQTAYQEAVKITEQLFAGHIKSLSAKELKQGLSNVPNYAVKSNDNHNIVELLVTAGIVNSKRQAREDLQNGAIYINGERIQDLTYNLSQQDKIDNELTVIRRGKKKYFVLTY.

Tyr-34 lines the L-tyrosine pocket. Positions 39–48 (PTADSLHLGH) match the 'HIGH' region motif. The L-tyrosine site is built by Tyr-169 and Gln-173. The 'KMSKS' region signature appears at 229-233 (KFGKS). Lys-232 contributes to the ATP binding site. Residues 352-418 (HNIVELLVTA…GKKKYFVLTY (67 aa)) form the S4 RNA-binding domain.

The protein belongs to the class-I aminoacyl-tRNA synthetase family. TyrS type 1 subfamily. As to quaternary structure, homodimer.

It is found in the cytoplasm. The catalysed reaction is tRNA(Tyr) + L-tyrosine + ATP = L-tyrosyl-tRNA(Tyr) + AMP + diphosphate + H(+). Functionally, catalyzes the attachment of tyrosine to tRNA(Tyr) in a two-step reaction: tyrosine is first activated by ATP to form Tyr-AMP and then transferred to the acceptor end of tRNA(Tyr). The protein is Tyrosine--tRNA ligase of Streptococcus mutans serotype c (strain ATCC 700610 / UA159).